The sequence spans 176 residues: Translation initiation factor IF-3 (176 aa).

The protein belongs to the IF-3 family. As to quaternary structure, monomer.

The protein resides in the cytoplasm. Its function is as follows. IF-3 binds to the 30S ribosomal subunit and shifts the equilibrium between 70S ribosomes and their 50S and 30S subunits in favor of the free subunits, thus enhancing the availability of 30S subunits on which protein synthesis initiation begins. In Streptococcus agalactiae serotype Ia (strain ATCC 27591 / A909 / CDC SS700), this protein is Translation initiation factor IF-3.